The chain runs to 201 residues: Dephospho-CoA kinase (201 aa).

Residues 4–201 (IIGITGGIAS…LEGGRQDDRD (198 aa)) enclose the DPCK domain. 12-17 (ASGKST) contacts ATP.

The protein belongs to the CoaE family.

The protein localises to the cytoplasm. It catalyses the reaction 3'-dephospho-CoA + ATP = ADP + CoA + H(+). It participates in cofactor biosynthesis; coenzyme A biosynthesis; CoA from (R)-pantothenate: step 5/5. Catalyzes the phosphorylation of the 3'-hydroxyl group of dephosphocoenzyme A to form coenzyme A. The sequence is that of Dephospho-CoA kinase from Streptococcus pneumoniae (strain ATCC BAA-255 / R6).